The following is a 305-amino-acid chain: tRNA pseudouridine synthase B (305 aa).

The active-site Nucleophile is the Asp48.

This sequence belongs to the pseudouridine synthase TruB family. Type 1 subfamily.

It catalyses the reaction uridine(55) in tRNA = pseudouridine(55) in tRNA. In terms of biological role, responsible for synthesis of pseudouridine from uracil-55 in the psi GC loop of transfer RNAs. The polypeptide is tRNA pseudouridine synthase B (Actinobacillus pleuropneumoniae serotype 5b (strain L20)).